The sequence spans 467 residues: MSLSLWQQCLARLQDELPATEFSMWIRPLQAELSDNTLALYAPNRFVLDWVRDKYLNNINGLLNDFCGADAPQLRFEVGAKPASSLQKGAVSPAAAAIPAAQVQTARVAPTIVRPGWDNVPAPAEPTYRSNVNVKHTFDNFVEGKSNQLARAAARQVADNPGGAYNPLFLYGGTGLGKTHLLHAVGNGIVARKPNAKVVYMHSERFVQDMVKALQNNAIEEFKRYYRSVDALLIDDIQFFANKERSQEEFFHTFNALLEGNQQIILTSDRYPKEINGVEDRLKSRFGWGLTVAIEPPELETRVAILMKKADENDIRLPGEVAFFIAKRLRSNVRELEGALNRVIANANFTGRAITIDFVREALRDLLALQEKLVTIDNIQKTVAEYYKIKVADLLSKRRSRSVARPRQMAMALAKELTNHSLPEIGDAFGGRDHTTVLHACRKIEQLREESHDIKEDFSNLIRTLSS.

A domain I, interacts with DnaA modulators region spans residues 1-85 (MSLSLWQQCL…FEVGAKPASS (85 aa)). Residues 85–130 (SLQKGAVSPAAAAIPAAQVQTARVAPTIVRPGWDNVPAPAEPTYRS) are domain II. The tract at residues 131–347 (NVNVKHTFDN…GALNRVIANA (217 aa)) is domain III, AAA+ region. ATP-binding residues include glycine 175, glycine 177, lysine 178, and threonine 179. Positions 348–467 (NFTGRAITID…FSNLIRTLSS (120 aa)) are domain IV, binds dsDNA.

This sequence belongs to the DnaA family. As to quaternary structure, oligomerizes as a right-handed, spiral filament on DNA at oriC.

The protein resides in the cytoplasm. Plays an essential role in the initiation and regulation of chromosomal replication. ATP-DnaA binds to the origin of replication (oriC) to initiate formation of the DNA replication initiation complex once per cell cycle. Binds the DnaA box (a 9 base pair repeat at the origin) and separates the double-stranded (ds)DNA. Forms a right-handed helical filament on oriC DNA; dsDNA binds to the exterior of the filament while single-stranded (ss)DNA is stabiized in the filament's interior. The ATP-DnaA-oriC complex binds and stabilizes one strand of the AT-rich DNA unwinding element (DUE), permitting loading of DNA polymerase. After initiation quickly degrades to an ADP-DnaA complex that is not apt for DNA replication. Binds acidic phospholipids. The protein is Chromosomal replication initiator protein DnaA of Klebsiella pneumoniae (strain 342).